The primary structure comprises 154 residues: Hemiasterlin resistant protein 1 (154 aa).

Disordered regions lie at residues 1–64 and 86–109; these read MVRR…PGLM and GMFT…PAGA. Low complexity-rich tracts occupy residues 7–28, 48–57, and 96–109; these read ASPS…SSFA, TPMGAPMGAP, and AEQA…PAGA. A CHCH domain is found at 116–154; sequence SQPCEFEWRQFVDCAQNQSDVSLCNGFNDIFKQCKARYA. Short sequence motifs (cx9C motif) lie at residues 119–129 and 139–149; these read CEFEWRQFVDC and CNGFNDIFKQC. 2 disulfide bridges follow: cysteine 119-cysteine 149 and cysteine 129-cysteine 139.

The polypeptide is Hemiasterlin resistant protein 1 (har-1) (Caenorhabditis elegans).